Here is a 153-residue protein sequence, read N- to C-terminus: MKIWVDADACPGPVRDIILRAGQRVKVHTVFVANHALSLPRLAYVSSVQVGAGLDVADRHIAQQAQPGDLAVTQDIPLAALLVPKGVVVLDPRGEVFTEENVAERLSVRNFMQELRESGVTTGGPDGYSAQDRQQFAGALDRELTRLVKTEPK.

This sequence belongs to the UPF0178 family.

This is UPF0178 protein MXAN_5526 from Myxococcus xanthus (strain DK1622).